A 101-amino-acid polypeptide reads, in one-letter code: Interleukin-8 (101 aa).

The first 22 residues, 1–22 (MTSKLAVALLAAFLLSAALCEG), serve as a signal peptide directing secretion. A Citrulline modification is found at arginine 27. Cystine bridges form between cysteine 34-cysteine 61 and cysteine 36-cysteine 77.

The protein belongs to the intercrine alpha (chemokine CxC) family. As to quaternary structure, homodimer. Interacts with TNFAIP6 (via Link domain); this interaction interferes with chemokine binding to glycosaminoglycans. Post-translationally, citrullination at Arg-27 prevents proteolysis, and dampens tissue inflammation, it also enhances leukocytosis, possibly through impaired chemokine clearance from the blood circulation.

It is found in the secreted. In terms of biological role, chemotactic factor that mediates inflammatory response by attracting neutrophils, basophils, and T-cells to clear pathogens and protect the host from infection. Also plays an important role in neutrophil activation. Released in response to an inflammatory stimulus, exerts its effect by binding to the G-protein-coupled receptors CXCR1 and CXCR2, primarily found in neutrophils, monocytes and endothelial cells. G-protein heterotrimer (alpha, beta, gamma subunits) constitutively binds to CXCR1/CXCR2 receptor and activation by IL8 leads to beta and gamma subunits release from Galpha (GNAI2 in neutrophils) and activation of several downstream signaling pathways including PI3K and MAPK pathways. The chain is Interleukin-8 (CXCL8) from Cercocebus atys (Sooty mangabey).